We begin with the raw amino-acid sequence, 150 residues long: Allograft inflammatory factor 1-like (150 aa).

Serine 2 carries the N-acetylserine modification. Serine 2 is modified (phosphoserine). In terms of domain architecture, EF-hand 1 spans 47-82 (EKLAAFKEKYMEFDLNNEGEIDLMSLKRMMEKLGVP). Aspartate 60, asparagine 62, glutamate 64, and glutamate 66 together coordinate Ca(2+). One can recognise an EF-hand 2; degenerate domain in the interval 83–117 (KTHLEMKKMISEVTGGVSDTISYRDFVNMMLGKRS). A disordered region spans residues 129-150 (KANESSPKPAGPPPERDIASLP). Serine 134 bears the Phosphoserine mark.

Homodimer (Potential). Monomer.

The protein localises to the cytoplasm. Its subcellular location is the cytoskeleton. It is found in the cell projection. The protein resides in the ruffle membrane. Functionally, actin-binding protein that promotes actin bundling. May neither bind calcium nor depend on calcium for function. In Mus musculus (Mouse), this protein is Allograft inflammatory factor 1-like (Aif1l).